The sequence spans 261 residues: Enolase-phosphatase E1 (261 aa).

The Mg(2+) site is built by Asp16 and Glu18. Residues 153 to 154 (SS) and Lys187 each bind substrate. Asp212 contacts Mg(2+).

This sequence belongs to the HAD-like hydrolase superfamily. MasA/MtnC family. As to quaternary structure, monomer. Mg(2+) is required as a cofactor.

The protein resides in the cytoplasm. It is found in the nucleus. It carries out the reaction 5-methylsulfanyl-2,3-dioxopentyl phosphate + H2O = 1,2-dihydroxy-5-(methylsulfanyl)pent-1-en-3-one + phosphate. It functions in the pathway amino-acid biosynthesis; L-methionine biosynthesis via salvage pathway; L-methionine from S-methyl-5-thio-alpha-D-ribose 1-phosphate: step 3/6. Its pathway is amino-acid biosynthesis; L-methionine biosynthesis via salvage pathway; L-methionine from S-methyl-5-thio-alpha-D-ribose 1-phosphate: step 4/6. Its function is as follows. Bifunctional enzyme that catalyzes the enolization of 2,3-diketo-5-methylthiopentyl-1-phosphate (DK-MTP-1-P) into the intermediate 2-hydroxy-3-keto-5-methylthiopentenyl-1-phosphate (HK-MTPenyl-1-P), which is then dephosphorylated to form the acireductone 1,2-dihydroxy-3-keto-5-methylthiopentene (DHK-MTPene). This chain is Enolase-phosphatase E1 (enoph1), found in Danio rerio (Zebrafish).